The primary structure comprises 264 residues: Zinc import ATP-binding protein ZnuC (264 aa).

An ABC transporter domain is found at 11-226; that stretch reads IELQNIKVVF…PTFIHLFGDQ (216 aa). Position 43–50 (43–50) interacts with ATP; the sequence is GPNGGGKS.

It belongs to the ABC transporter superfamily. Zinc importer (TC 3.A.1.15.5) family. The complex is composed of two ATP-binding proteins (ZnuC), two transmembrane proteins (ZnuB) and a solute-binding protein (ZnuA).

Its subcellular location is the cell inner membrane. It catalyses the reaction Zn(2+)(out) + ATP(in) + H2O(in) = Zn(2+)(in) + ADP(in) + phosphate(in) + H(+)(in). Part of the ABC transporter complex ZnuABC involved in zinc import. Responsible for energy coupling to the transport system. In Mannheimia succiniciproducens (strain KCTC 0769BP / MBEL55E), this protein is Zinc import ATP-binding protein ZnuC.